Here is a 398-residue protein sequence, read N- to C-terminus: Acetate kinase (398 aa).

Residue Asn-8 participates in Mg(2+) binding. Lys-15 is an ATP binding site. Arg-89 lines the substrate pocket. Catalysis depends on Asp-146, which acts as the Proton donor/acceptor. Residues 206–210 (HIGNG), 281–283 (DLR), and 329–333 (GVGEN) contribute to the ATP site. Glu-383 is a binding site for Mg(2+).

This sequence belongs to the acetokinase family. In terms of assembly, homodimer. It depends on Mg(2+) as a cofactor. The cofactor is Mn(2+).

The protein localises to the cytoplasm. It catalyses the reaction acetate + ATP = acetyl phosphate + ADP. It functions in the pathway metabolic intermediate biosynthesis; acetyl-CoA biosynthesis; acetyl-CoA from acetate: step 1/2. Functionally, catalyzes the formation of acetyl phosphate from acetate and ATP. Can also catalyze the reverse reaction. This Macrococcus caseolyticus (strain JCSC5402) (Macrococcoides caseolyticum) protein is Acetate kinase.